Reading from the N-terminus, the 486-residue chain is Transcription factor aptf-4 (486 aa).

Disordered stretches follow at residues 25–49 (CEPS…SAKM) and 150–173 (LSTT…NQEK). Residues 150-169 (LSTTSANFTPDWNTTTNGPC) are compositionally biased toward polar residues. The interval 301–430 (QRQRKVTCFS…IVEQAALYCE (130 aa)) is H-S-H (helix-span-helix), dimerization.

The protein belongs to the AP-2 family. Binds DNA as a dimer.

It localises to the nucleus. In terms of biological role, sequence-specific DNA-binding protein that interacts with enhancer elements to regulate transcription of selected genes. Required for neuroblast and epidermal morphogenesis, perhaps acting in cooperation with transcription factor aptf-2. The protein is Transcription factor aptf-4 of Caenorhabditis elegans.